The primary structure comprises 137 residues: Transcription antitermination protein NusB (137 aa).

This sequence belongs to the NusB family.

Involved in transcription antitermination. Required for transcription of ribosomal RNA (rRNA) genes. Binds specifically to the boxA antiterminator sequence of the ribosomal RNA (rrn) operons. This Aeromonas salmonicida (strain A449) protein is Transcription antitermination protein NusB.